We begin with the raw amino-acid sequence, 392 residues long: Gastricsin (392 aa).

Residues 1–16 (MKWMVVALLCLPLLEA) form the signal peptide. A propeptide spans 17-62 (ALIRVPLKKMKSIRETMKEQGVLKDFLKNHKYDPGQKYHFGKFGDY) (activation peptide). The region spanning 76-389 (YYGEISIGTP…DMGNNRVGLA (314 aa)) is the Peptidase A1 domain. D94 is a catalytic residue. Intrachain disulfides connect C107–C112 and C270–C275. D280 is a catalytic residue. An intrachain disulfide couples C314 to C347.

This sequence belongs to the peptidase A1 family.

It is found in the secreted. It catalyses the reaction More restricted specificity than pepsin A, but shows preferential cleavage at Tyr-|-Xaa bonds. High activity on hemoglobin.. In terms of biological role, hydrolyzes a variety of proteins. This is Gastricsin (Pgc) from Mus musculus (Mouse).